A 92-amino-acid polypeptide reads, in one-letter code: Small ribosomal subunit protein uS19 (92 aa).

The protein belongs to the universal ribosomal protein uS19 family.

Functionally, protein S19 forms a complex with S13 that binds strongly to the 16S ribosomal RNA. This Staphylococcus epidermidis (strain ATCC 35984 / DSM 28319 / BCRC 17069 / CCUG 31568 / BM 3577 / RP62A) protein is Small ribosomal subunit protein uS19.